Reading from the N-terminus, the 185-residue chain is MMDEILLECEERMTSSVEFAREDLTTIRTGRANPAMFNSVIAEYYGVPTPITQMATISVPEARMMLIKPYEQSQIQVIENAIRNSDLGVNPTNDGQVLRVTIPQLTEERRREMVRQAKSKGEDAKIAIRNIRRHGMEQLAKIQKDGDAGEDEVRASENELEKITSNYVKQVDELVERKEEELMEV.

It belongs to the RRF family.

It is found in the cytoplasm. Functionally, responsible for the release of ribosomes from messenger RNA at the termination of protein biosynthesis. May increase the efficiency of translation by recycling ribosomes from one round of translation to another. This Corynebacterium urealyticum (strain ATCC 43042 / DSM 7109) protein is Ribosome-recycling factor.